We begin with the raw amino-acid sequence, 449 residues long: Tubulin alpha-2B chain (449 aa).

A GTP-binding site is contributed by Gln-11. Lys-40 carries the post-translational modification N6-acetyllysine. GTP contacts are provided by Glu-71, Ser-140, Gly-144, Thr-145, Thr-179, Asn-206, and Asn-228. Residue Glu-71 participates in Mg(2+) binding. Glu-254 is an active-site residue.

This sequence belongs to the tubulin family. Dimer of alpha and beta chains. A typical microtubule is a hollow water-filled tube with an outer diameter of 25 nm and an inner diameter of 15 nM. Alpha-beta heterodimers associate head-to-tail to form protofilaments running lengthwise along the microtubule wall with the beta-tubulin subunit facing the microtubule plus end conferring a structural polarity. Microtubules usually have 13 protofilaments but different protofilament numbers can be found in some organisms and specialized cells. The cofactor is Mg(2+). In terms of processing, acetylation of alpha chains at Lys-40 stabilizes microtubules and affects affinity and processivity of microtubule motors. This modification has a role in multiple cellular functions, ranging from cell motility, cell cycle progression or cell differentiation to intracellular trafficking and signaling.

It is found in the cytoplasm. The protein resides in the cytoskeleton. The protein localises to the spindle. Its subcellular location is the nucleus. The enzyme catalyses GTP + H2O = GDP + phosphate + H(+). Its function is as follows. Tubulin is the major constituent of microtubules, a cylinder consisting of laterally associated linear protofilaments composed of alpha- and beta-tubulin heterodimers. Microtubules grow by the addition of GTP-tubulin dimers to the microtubule end, where a stabilizing cap forms. Below the cap, tubulin dimers are in GDP-bound state, owing to GTPase activity of alpha-tubulin. The protein is Tubulin alpha-2B chain (ALTBE) of Physarum polycephalum (Slime mold).